Here is a 465-residue protein sequence, read N- to C-terminus: Juvenile hormone epoxide hydrolase 2 (465 aa).

Residues 7 to 27 traverse the membrane as a helical segment; sequence ILWIAIVIGLGVLYYEITKEF. Asp-224 functions as the Nucleophile in the catalytic mechanism. The active-site Proton donor is Tyr-370. His-427 (proton acceptor) is an active-site residue.

This sequence belongs to the peptidase S33 family.

The protein resides in the microsome membrane. It localises to the endoplasmic reticulum membrane. It catalyses the reaction cis-stilbene oxide + H2O = (1R,2R)-hydrobenzoin. It carries out the reaction 1-(4-methoxyphenyl)-N-methyl-N-[(3-methyloxetan-3-yl)methyl]methanamine + H2O = 2-{[(4-methoxybenzyl)(methyl)amino]methyl}-2-methylpropane-1,3-diol. In terms of biological role, catalyzes juvenile hormone hydrolysis. The sequence is that of Juvenile hormone epoxide hydrolase 2 from Ctenocephalides felis (Cat flea).